The primary structure comprises 62 residues: Sperm protamine P1 (62 aa).

Positions 1–62 (MARYRHSRSR…RYSRRRRRRY (62 aa)) are disordered.

The protein belongs to the protamine P1 family. Testis.

It is found in the nucleus. The protein localises to the chromosome. In terms of biological role, protamines substitute for histones in the chromatin of sperm during the haploid phase of spermatogenesis. They compact sperm DNA into a highly condensed, stable and inactive complex. In Lagostrophus fasciatus (Banded hare-wallaby), this protein is Sperm protamine P1 (PRM1).